Reading from the N-terminus, the 228-residue chain is Translin (228 aa).

The interval 86 to 90 (RFHEH) is DNA/RNA binding. Positions 177 to 198 (LDSGFRLLNLKNDSLRKRYDGL) are leucine-zipper. Residue lysine 187 is modified to N6-acetyllysine. At serine 190 the chain carries Phosphoserine. Lysine 199 carries the N6-acetyllysine modification.

This sequence belongs to the translin family. Ring-shaped heterooctamer of six TSN and two TSNAX subunits, DNA/RNA binding occurs inside the ring.

The protein resides in the cytoplasm. The protein localises to the nucleus. DNA-binding protein that specifically recognizes consensus sequences at the breakpoint junctions in chromosomal translocations, mostly involving immunoglobulin (Ig)/T-cell receptor gene segments. Seems to recognize single-stranded DNA ends generated by staggered breaks occurring at recombination hot spots. In terms of biological role, exhibits both single-stranded and double-stranded endoribonuclease activity. May act as an activator of RNA-induced silencing complex (RISC) by facilitating endonucleolytic cleavage of the siRNA passenger strand. This is Translin from Homo sapiens (Human).